A 415-amino-acid chain; its full sequence is L-threonine dehydratase biosynthetic IlvA (415 aa).

K53 bears the N6-(pyridoxal phosphate)lysine mark. Pyridoxal 5'-phosphate is bound by residues N80, 183–187 (GGGGL), and S308. An ACT-like domain is found at 332-406 (HYFIIQFPQR…KGFEYREINK (75 aa)).

The protein belongs to the serine/threonine dehydratase family. In terms of assembly, homotetramer. Pyridoxal 5'-phosphate is required as a cofactor.

It carries out the reaction L-threonine = 2-oxobutanoate + NH4(+). Its pathway is amino-acid biosynthesis; L-isoleucine biosynthesis; 2-oxobutanoate from L-threonine: step 1/1. Catalyzes the anaerobic formation of alpha-ketobutyrate and ammonia from threonine in a two-step reaction. The first step involved a dehydration of threonine and a production of enamine intermediates (aminocrotonate), which tautomerizes to its imine form (iminobutyrate). Both intermediates are unstable and short-lived. The second step is the nonenzymatic hydrolysis of the enamine/imine intermediates to form 2-ketobutyrate and free ammonia. In the low water environment of the cell, the second step is accelerated by RidA. In Halalkalibacterium halodurans (strain ATCC BAA-125 / DSM 18197 / FERM 7344 / JCM 9153 / C-125) (Bacillus halodurans), this protein is L-threonine dehydratase biosynthetic IlvA (ilvA).